The chain runs to 194 residues: PLASMODESMATA CALLOSE-BINDING PROTEIN 2 (194 aa).

The signal sequence occupies residues 1–16 (MAPLVLYLLTLLMAGH). Cysteine 22 and cysteine 84 form a disulfide bridge. Residue asparagine 85 is glycosylated (N-linked (GlcNAc...) asparagine). Over residues 106 to 116 (SSASGSSGSGS) the composition is skewed to low complexity. Residues 106–140 (SSASGSSGSGSTTVTPGKNSPKGSNSITTFPGGNS) are disordered. Residues 117–140 (TTVTPGKNSPKGSNSITTFPGGNS) are compositionally biased toward polar residues. A glycan (N-linked (GlcNAc...) asparagine) is linked at asparagine 154. Serine 171 carries the GPI-anchor amidated serine lipid modification. The propeptide at 172–194 (SGFALYYSNNLLLTGFCSLVMML) is removed in mature form.

Post-translationally, contains two additional disulfide bonds. As to expression, expressed in the shoot apical region and in young leaves but also detected in the laminar and vasculature of mature leaves.

Its subcellular location is the cell membrane. The protein localises to the cell junction. It localises to the plasmodesma. Functionally, able to bind (1-&gt;3)-beta-D-glucans (laminarin). The chain is PLASMODESMATA CALLOSE-BINDING PROTEIN 2 (PDCB2) from Arabidopsis thaliana (Mouse-ear cress).